The following is a 599-amino-acid chain: Glycerophosphodiester phosphodiesterase domain-containing protein 5 (599 aa).

Residues 1–42 (MVKHQPLQYYEPQLCLSCLTGIYGCRWKRYQRSHDDTTKWER) are Cytoplasmic-facing. Intrachain disulfides connect C15/C18 and C25/C576. Residues 43 to 63 (LWFLILTSSFFLTLVWFYFWW) traverse the membrane as a helical segment. Residues 64–87 (EVHNDYNEINWFLYNRMGYWSDWS) are Extracellular-facing. The chain crosses the membrane as a helical span at residues 88–108 (IPILVTTAAGFTYITVLLILA). Topologically, residues 109–125 (LCHIAVGQQMNLHWLHK) are cytoplasmic. A helical transmembrane segment spans residues 126 to 146 (IGLMTTLITTVVTMSSIAQLW). The Extracellular segment spans residues 147 to 160 (DDEWEMVFISLQAT). Residues 161–181 (APFLHIGALAAVTALSWLIAG) form a helical membrane-spanning segment. Residues 182-192 (QFARMEKATSQ) are Cytoplasmic-facing. Residues 193-213 (MLMVTAYLAVVVALYLVPLTI) form a helical membrane-spanning segment. Residues 214–497 (SSPCIMEKKA…IWLMPPDEYR (284 aa)) are Extracellular-facing. The 258-residue stretch at 228–485 (PAIIGHRGAP…DSSHVLRKVP (258 aa)) folds into the GP-PDE domain. N301, N336, N352, N374, and N448 each carry an N-linked (GlcNAc...) asparagine glycan. Residues 498–518 (LIWITSDLISFIIIVGVFIFQ) traverse the membrane as a helical segment. Residues 519–599 (NYHNDQWRLG…DHRDTRLRMN (81 aa)) lie on the Cytoplasmic side of the membrane.

Belongs to the glycerophosphoryl diester phosphodiesterase family. As to quaternary structure, interacts with PRDX1; forms a mixed-disulfide with PRDX1, leading to disrupt intramolecular disulfide bond between Cys-25 and Cys-576. In terms of processing, intramolecular disulfide bond between Cys-25 and Cys-576 is reduced by PRDX1. Detected in mature motor neurons.

The protein localises to the endomembrane system. It is found in the cytoplasm. Its subcellular location is the perinuclear region. It localises to the cell projection. The protein resides in the growth cone. The catalysed reaction is a 1,2-diacyl-sn-glycero-3-phospho-(1D-myo-inositol-4,5-bisphosphate) + H2O = 1D-myo-inositol 1,4,5-trisphosphate + a 1,2-diacyl-sn-glycerol + H(+). It catalyses the reaction sn-glycerol 3-phosphocholine + H2O = sn-glycerol 3-phosphate + choline + H(+). Its activity is regulated as follows. Activated by PRDX1 by reduction of an intramolecular disulfide bond. Functionally, glycerophosphodiester phosphodiesterase that promotes cell cycle exit and drives spinal motor neuron differentiation. Mediates the cleavage of glycosylphosphatidylinositol (GPI) anchor of target proteins: removes the GPI-anchor of RECK, leading to release RECK from the plasma membrane. May contribute to the osmotic regulation of cellular glycerophosphocholine. The sequence is that of Glycerophosphodiester phosphodiesterase domain-containing protein 5 (GDPD5) from Gallus gallus (Chicken).